Consider the following 231-residue polypeptide: Killer cell lectin-like receptor subfamily F member 1 (231 aa).

Over 1-38 (MQDEERYMTLNVQSKKRTSTQTTQLTFKDYSVVLHWYK) the chain is Cytoplasmic. Y7 is modified (phosphotyrosine). A helical; Signal-anchor for type II membrane protein membrane pass occupies residues 39-59 (ILLGISGTLNGILALALISLI). The Extracellular portion of the chain corresponds to 60–231 (LLVSQGVLLK…SSVFKWICQY (172 aa)). Residues N77, N91, N96, and N176 are each glycosylated (N-linked (GlcNAc...) asparagine). Positions 121 to 230 (YRGKCYWFSN…CSSVFKWICQ (110 aa)) constitute a C-type lectin domain. 2 disulfide bridges follow: C142–C229 and C208–C221.

As to quaternary structure, homodimer. Interacts with CLEC2B. In terms of processing, phosphorylated on Tyr-7; this phosphorylation is required for NKp80/KLRF1-mediated cytotoxicity.

The protein localises to the membrane. In terms of biological role, functions as an activating receptor involved in immunosurveillance upon binding to various ligands displayed at the surface of myeloid cells. Upon interaction with CLEC2B ligand, stimulates NK-cell cytotoxicity and cytokine production leading to the cytolysis of malignant CLEC2B-expressing myeloid cells. Actviation of the common cytotoxicity pathway involves SRC and SYK kinases. The sequence is that of Killer cell lectin-like receptor subfamily F member 1 (KLRF1) from Macaca fascicularis (Crab-eating macaque).